Reading from the N-terminus, the 894-residue chain is Eukaryotic translation initiation factor 3 subunit C (894 aa).

2 disordered regions span residues 1-28 and 162-235; these read MSRF…KANK and SDYR…VTKM. Acidic residues-rich tracts occupy residues 12-22, 169-189, and 203-214; these read SDTDSSEDEVE, DEDG…EEVP, and SESESDSDDDDS. The segment covering 215-224 has biased composition (polar residues); sequence FNWSSEPDTN. Residues 625–801 enclose the PCI domain; sequence YHMHINVELM…DCLIMHRVEP (177 aa). Positions 824-894 are disordered; it reads QILEPRTGRG…RRHPQKPRAF (71 aa). The segment covering 845–854 has biased composition (basic and acidic residues); the sequence is RNERQGDKQK. The segment covering 855-870 has biased composition (gly residues); the sequence is GSGGFQGERRGGPGGP. Residues 884-894 are compositionally biased toward basic residues; that stretch reads QRRHPQKPRAF.

Belongs to the eIF-3 subunit C family. Component of the eukaryotic translation initiation factor 3 (eIF-3) complex.

It localises to the cytoplasm. Component of the eukaryotic translation initiation factor 3 (eIF-3) complex, which is involved in protein synthesis of a specialized repertoire of mRNAs and, together with other initiation factors, stimulates binding of mRNA and methionyl-tRNAi to the 40S ribosome. The eIF-3 complex specifically targets and initiates translation of a subset of mRNAs involved in cell proliferation. The sequence is that of Eukaryotic translation initiation factor 3 subunit C from Caenorhabditis briggsae.